A 539-amino-acid chain; its full sequence is MELRTVVATVESGEQDAVLKVLQIYNQEKSQCFTFDDEEREERKKMAQLLIKFLERELQPSCQVTCLESIRILSRDKYCLEPFTTEEGLKTLSRHAGIDYSEELIREVPDLEVILESLKCLCNIVFSSPRAQELTAEARLVVGLTKRIKLYNERSLPHEVKFFDLRLLFLLTALRVDIRQQLAQELRGISLMTDTLELTLGVKWMDPYEVATEEGLLPPLPRQETERAMEILKVLFNITFDSSKREVDEEDAALYRHLGALLRHCLMISADGEDRTEEFHSHTVNLLGNLPLKCLDVLLTPKVRPGSLEYMGVNMDAVNILLDFLERRLDRGHKLKESLTPVLNLLTESARVHRQTRKFLKAKVLPPLRDVKNRPEVGNSLRNKLVRLMTHIDTDVKHCAAEFLFVLCKESVSRFVKYTGYGNAAGLLAARGLMAGGREEGEYSEDEDTDTEEYKEAKPNINPVTGRVEEKLPNPMEGMTEEQKEYEAMKLVNMFDKLSREQVIQPMGITPSGNLAPMENAIRDMADERSSSDSDLGLD.

The disordered stretch occupies residues 507–539; that stretch reads MGITPSGNLAPMENAIRDMADERSSSDSDLGLD. Basic and acidic residues predominate over residues 521 to 532; that stretch reads AIRDMADERSSS.

The protein belongs to the synembryn family.

The protein localises to the cytoplasm. It localises to the cell cortex. In terms of biological role, chaperone that specifically binds and folds nascent G alpha proteins prior to G protein heterotrimer formation, promoting their stability and activity: folds GNAI1, GNAO1, GNA13 and GNAQ. Does not fold G(s) G-alpha proteins GNAS nor GNAL. Also acts as a guanine nucleotide exchange factor (GEF) for G alpha proteins by stimulating exchange of bound GDP for free GTP. In Gallus gallus (Chicken), this protein is Chaperone Ric-8A (RIC8A).